A 313-amino-acid polypeptide reads, in one-letter code: 3'-5' exoribonuclease YhaM (313 aa).

Residues 22–90 constitute a DNA-binding region (OB); that stretch reads SSVKGTASNG…QLKIRQIRQA (69 aa). The HD domain occupies 163 to 279; sequence HVVSMLRLAK…LHQIDLMDAS (117 aa).

It belongs to the YhaM family.

Its function is as follows. Shows a 3'-5' exoribonuclease activity. In Listeria monocytogenes serovar 1/2a (strain ATCC BAA-679 / EGD-e), this protein is 3'-5' exoribonuclease YhaM.